A 153-amino-acid polypeptide reads, in one-letter code: 6,7-dimethyl-8-ribityllumazine synthase (153 aa).

Residues Phe-22, 56–58 (AFE), and 80–82 (AVI) contribute to the 5-amino-6-(D-ribitylamino)uracil site. 85–86 (AT) serves as a coordination point for (2S)-2-hydroxy-3-oxobutyl phosphate. The active-site Proton donor is His-88. Residue Phe-113 coordinates 5-amino-6-(D-ribitylamino)uracil. (2S)-2-hydroxy-3-oxobutyl phosphate is bound at residue Arg-127.

Belongs to the DMRL synthase family.

It carries out the reaction (2S)-2-hydroxy-3-oxobutyl phosphate + 5-amino-6-(D-ribitylamino)uracil = 6,7-dimethyl-8-(1-D-ribityl)lumazine + phosphate + 2 H2O + H(+). It functions in the pathway cofactor biosynthesis; riboflavin biosynthesis; riboflavin from 2-hydroxy-3-oxobutyl phosphate and 5-amino-6-(D-ribitylamino)uracil: step 1/2. Catalyzes the formation of 6,7-dimethyl-8-ribityllumazine by condensation of 5-amino-6-(D-ribitylamino)uracil with 3,4-dihydroxy-2-butanone 4-phosphate. This is the penultimate step in the biosynthesis of riboflavin. In Clostridium tetani (strain Massachusetts / E88), this protein is 6,7-dimethyl-8-ribityllumazine synthase.